A 459-amino-acid polypeptide reads, in one-letter code: Methionine aminopeptidase 2-2 (459 aa).

A compositionally biased stretch (basic and acidic residues) spans Met-1 to Gly-12. Residues Met-1–Ser-87 form a disordered region. Acidic residues predominate over residues Gly-43–Glu-54. The span at Lys-55 to Ala-66 shows a compositional bias: basic and acidic residues. A compositionally biased stretch (basic residues) spans Lys-67–Lys-79. His-210 lines the substrate pocket. A divalent metal cation is bound by residues Asp-231, Asp-242, and His-311. Residue His-319 coordinates substrate. A divalent metal cation contacts are provided by Glu-344 and Glu-440.

Belongs to the peptidase M24A family. Methionine aminopeptidase eukaryotic type 2 subfamily. It depends on Co(2+) as a cofactor. The cofactor is Zn(2+). Mn(2+) is required as a cofactor. Fe(2+) serves as cofactor.

The protein localises to the cytoplasm. The enzyme catalyses Release of N-terminal amino acids, preferentially methionine, from peptides and arylamides.. Cotranslationally removes the N-terminal methionine from nascent proteins. The N-terminal methionine is often cleaved when the second residue in the primary sequence is small and uncharged (Met-Ala-, Cys, Gly, Pro, Ser, Thr, or Val). This Pyrenophora teres f. teres (strain 0-1) (Barley net blotch fungus) protein is Methionine aminopeptidase 2-2.